Consider the following 535-residue polypeptide: EGF domain-specific O-linked N-acetylglucosamine transferase (535 aa).

The signal sequence occupies residues 1 to 16 (MFILLMFVLLLQEILA). N-linked (GlcNAc...) asparagine glycosylation is found at Asn-22 and Asn-271. A Required for optimal activity motif is present at residues 303-305 (DYD). Residues Asn-362 and Asn-501 are each glycosylated (N-linked (GlcNAc...) asparagine).

This sequence belongs to the glycosyltransferase 61 family.

Its subcellular location is the endoplasmic reticulum lumen. It carries out the reaction L-seryl-[protein] + UDP-N-acetyl-alpha-D-glucosamine = 3-O-(N-acetyl-beta-D-glucosaminyl)-L-seryl-[protein] + UDP + H(+). It catalyses the reaction L-threonyl-[protein] + UDP-N-acetyl-alpha-D-glucosamine = 3-O-(N-acetyl-beta-D-glucosaminyl)-L-threonyl-[protein] + UDP + H(+). Its function is as follows. Catalyzes the transfer of a single N-acetylglucosamine from UDP-GlcNAc to a serine or threonine residue in extracellular proteins resulting in their modification with a beta-linked N-acetylglucosamine (O-GlcNAc). Specifically glycosylates the Thr residue located between the fifth and sixth conserved cysteines of folded EGF-like domains. The chain is EGF domain-specific O-linked N-acetylglucosamine transferase (EOGT) from Gallus gallus (Chicken).